The primary structure comprises 375 residues: 23S rRNA (uracil(747)-C(5))-methyltransferase RlmC (375 aa).

[4Fe-4S] cluster contacts are provided by C3, C11, C14, and C87. S-adenosyl-L-methionine contacts are provided by Q212, F241, E262, and N307. C334 acts as the Nucleophile in catalysis.

Belongs to the class I-like SAM-binding methyltransferase superfamily. RNA M5U methyltransferase family. RlmC subfamily.

The enzyme catalyses uridine(747) in 23S rRNA + S-adenosyl-L-methionine = 5-methyluridine(747) in 23S rRNA + S-adenosyl-L-homocysteine + H(+). Catalyzes the formation of 5-methyl-uridine at position 747 (m5U747) in 23S rRNA. This chain is 23S rRNA (uracil(747)-C(5))-methyltransferase RlmC, found in Salmonella agona (strain SL483).